Reading from the N-terminus, the 115-residue chain is UPF0738 protein SAB0871 (115 aa).

It belongs to the UPF0738 family.

This chain is UPF0738 protein SAB0871, found in Staphylococcus aureus (strain bovine RF122 / ET3-1).